A 554-amino-acid chain; its full sequence is CTP synthase (554 aa).

The amidoligase domain stretch occupies residues 1 to 265; that stretch reads MTPLIFVTGG…DELVIDQFKL (265 aa). Ser-13 serves as a coordination point for CTP. A UTP-binding site is contributed by Ser-13. Residues 14–19 and Asp-71 contribute to the ATP site; that span reads SLGKGI. Residues Asp-71 and Glu-139 each coordinate Mg(2+). CTP-binding positions include 146-148, 186-191, and Lys-222; these read DIE and KTKPTQ. Residues 186–191 and Lys-222 contribute to the UTP site; that span reads KTKPTQ. The Glutamine amidotransferase type-1 domain occupies 292–545; it reads TIAVVGKYVD…VRAAREKKAG (254 aa). Residue Gly-353 participates in L-glutamine binding. Catalysis depends on Cys-380, which acts as the Nucleophile; for glutamine hydrolysis. L-glutamine contacts are provided by residues 381 to 384, Glu-404, and Arg-471; that span reads YGMQ. Residues His-518 and Glu-520 contribute to the active site.

It belongs to the CTP synthase family. Homotetramer.

The catalysed reaction is UTP + L-glutamine + ATP + H2O = CTP + L-glutamate + ADP + phosphate + 2 H(+). It catalyses the reaction L-glutamine + H2O = L-glutamate + NH4(+). It carries out the reaction UTP + NH4(+) + ATP = CTP + ADP + phosphate + 2 H(+). It functions in the pathway pyrimidine metabolism; CTP biosynthesis via de novo pathway; CTP from UDP: step 2/2. With respect to regulation, allosterically activated by GTP, when glutamine is the substrate; GTP has no effect on the reaction when ammonia is the substrate. The allosteric effector GTP functions by stabilizing the protein conformation that binds the tetrahedral intermediate(s) formed during glutamine hydrolysis. Inhibited by the product CTP, via allosteric rather than competitive inhibition. Catalyzes the ATP-dependent amination of UTP to CTP with either L-glutamine or ammonia as the source of nitrogen. Regulates intracellular CTP levels through interactions with the four ribonucleotide triphosphates. The polypeptide is CTP synthase (Xanthomonas campestris pv. campestris (strain B100)).